The following is an 84-amino-acid chain: Esculentin-1B (84 aa).

A signal peptide spans 1–22; sequence MFTLKKPLLLIVLLGMISLSLC. A propeptide spanning residues 23–38 is cleaved from the precursor; that stretch reads EQERNADEEEGSEIKR. The cysteines at positions 78 and 84 are disulfide-linked.

This sequence belongs to the frog skin active peptide (FSAP) family. Brevinin subfamily. As to expression, expressed by the skin glands.

It localises to the secreted. Functionally, shows antibacterial activity against representative Gram-negative and Gram-positive bacterial species, and hemolytic activity. The protein is Esculentin-1B of Pelophylax lessonae (Pool frog).